The primary structure comprises 150 residues: UPF0178 protein BceJ2315_16760 (150 aa).

It belongs to the UPF0178 family.

The protein is UPF0178 protein BceJ2315_16760 of Burkholderia cenocepacia (strain ATCC BAA-245 / DSM 16553 / LMG 16656 / NCTC 13227 / J2315 / CF5610) (Burkholderia cepacia (strain J2315)).